Consider the following 283-residue polypeptide: MIIHPQFDPVLISIGPLAVRWYALSYILGFILFTFLGRRRIAQGLSVFTKESLDDFLTWGILGVILGGRLGYVLFYKFSDYLAHPLDIFKVWEGGMSFHGGFLGVVIAIWLFGRKHGIGFLKLMDTVAPLVPLGLASGRIGNFINGELWGRVTDINAFWAMGFPQARYEDAEAAAHNPLWAEWLQQYGMLPRHPSQLYQFALEGICLFAVVWLFSKKQRPTGQVASLFLGGYGIFRFIAEFARQPDDYLGLLTLGLSMGQWLSVPMIVLGIVGFVRFGMKKQH.

4 helical membrane passes run 17–37, 56–76, 92–112, and 117–137; these read LAVR…TFLG, FLTW…VLFY, WEGG…IWLF, and GIGF…GLAS. R139 serves as a coordination point for a 1,2-diacyl-sn-glycero-3-phospho-(1'-sn-glycerol). Helical transmembrane passes span 194–214, 222–242, and 255–275; these read PSQL…VWLF, GQVA…AEFA, and GLSM…VGFV.

Belongs to the Lgt family.

The protein resides in the cell inner membrane. It catalyses the reaction L-cysteinyl-[prolipoprotein] + a 1,2-diacyl-sn-glycero-3-phospho-(1'-sn-glycerol) = an S-1,2-diacyl-sn-glyceryl-L-cysteinyl-[prolipoprotein] + sn-glycerol 1-phosphate + H(+). It functions in the pathway protein modification; lipoprotein biosynthesis (diacylglyceryl transfer). Catalyzes the transfer of the diacylglyceryl group from phosphatidylglycerol to the sulfhydryl group of the N-terminal cysteine of a prolipoprotein, the first step in the formation of mature lipoproteins. This chain is Phosphatidylglycerol--prolipoprotein diacylglyceryl transferase, found in Neisseria meningitidis serogroup C / serotype 2a (strain ATCC 700532 / DSM 15464 / FAM18).